A 268-amino-acid chain; its full sequence is TATA-box-binding protein (268 aa).

A compositionally biased stretch (polar residues) spans 1–24 (MDSLTTHPATAQQARAFTSPSSLS). A disordered region spans residues 1–86 (MDSLTTHPAT…TPAATPGASA (86 aa)). Residues 50–86 (NGQSANGNVNGQQQGANAANGNGVMPATPAATPGASA) are compositionally biased toward low complexity. 2 repeat units span residues 95–171 (LQNI…ARII) and 185–262 (IQNI…YPVL).

It belongs to the TBP family. As to quaternary structure, belongs to the TFIID complex together with the TBP-associated factors (TAFs). Binds DNA as monomer.

The protein resides in the nucleus. Functionally, general transcription factor that functions at the core of the DNA-binding multiprotein factor TFIID. Binding of TFIID to the TATA box is the initial transcriptional step of the pre-initiation complex (PIC), playing a role in the activation of eukaryotic genes transcribed by RNA polymerase II. This Emericella nidulans (strain FGSC A4 / ATCC 38163 / CBS 112.46 / NRRL 194 / M139) (Aspergillus nidulans) protein is TATA-box-binding protein (tbpA).